Reading from the N-terminus, the 86-residue chain is Putative defensin-like protein 189 (86 aa).

The N-terminal stretch at 1–28 is a signal peptide; the sequence is MKMAKSANEIGFITCLVVFLVLTGQSNG. Disulfide bonds link cysteine 39–cysteine 85, cysteine 52–cysteine 71, cysteine 57–cysteine 80, and cysteine 61–cysteine 82.

This sequence belongs to the DEFL family.

It localises to the secreted. This chain is Putative defensin-like protein 189, found in Arabidopsis thaliana (Mouse-ear cress).